Reading from the N-terminus, the 84-residue chain is MDKMKSYIYFFTIACIIAVIYCVLVNLLQINVIPVVLAFSLILILTISTINKKIAHKMEDIEVLFMLLVLAFFAYAIYKLYIPV.

3 helical membrane-spanning segments follow: residues 8–28, 30–50, and 63–83; these read IYFF…VNLL, INVI…ISTI, and VLFM…LYIP.

The protein localises to the cell membrane. This is an uncharacterized protein from Methanocaldococcus jannaschii (strain ATCC 43067 / DSM 2661 / JAL-1 / JCM 10045 / NBRC 100440) (Methanococcus jannaschii).